The chain runs to 677 residues: Gamma-tubulin complex subunit mod21 (677 aa).

As to quaternary structure, component of the gamma-tubulin complex composed of at least alp4, alp6, alp16, ghf1, gtb1 and mod21.

The protein localises to the cytoplasm. Its subcellular location is the cytoskeleton. It localises to the microtubule organizing center. The protein resides in the spindle pole body. Functionally, component of the gamma-tubulin complex that is required for the regulation of both interphase microtubule organization and nucleation, and mitotic bipolar spindles. Required for correct septation. This chain is Gamma-tubulin complex subunit mod21, found in Schizosaccharomyces pombe (strain 972 / ATCC 24843) (Fission yeast).